Here is a 125-residue protein sequence, read N- to C-terminus: Fluoride-specific ion channel FluC (125 aa).

4 helical membrane passes run 4-24, 35-55, 69-89, and 103-123; these read WLFV…ISEL, YGTL…FALI, LMVG…DTVV, and MGLN…LVAS. Gly-75 and Thr-78 together coordinate Na(+).

The protein belongs to the fluoride channel Fluc/FEX (TC 1.A.43) family.

Its subcellular location is the cell inner membrane. The catalysed reaction is fluoride(in) = fluoride(out). With respect to regulation, na(+) is not transported, but it plays an essential structural role and its presence is essential for fluoride channel function. Its function is as follows. Fluoride-specific ion channel. Important for reducing fluoride concentration in the cell, thus reducing its toxicity. In Aeromonas salmonicida (strain A449), this protein is Fluoride-specific ion channel FluC.